A 973-amino-acid chain; its full sequence is Peptidyl-glycine alpha-amidating monooxygenase (973 aa).

A signal peptide spans 1–20; the sequence is MAGRVPSLLVLLVFPSSCLA. The segment at 1–494 is peptidylglycine alpha-hydroxylating monooxygenase; the sequence is MAGRVPSLLV…EGTWEPEHTG (494 aa). Residues 21-30 constitute a propeptide that is removed on maturation; sequence FRSPLSVFKR. Residues 31 to 863 are Intragranular-facing; it reads FKETTRPFSN…QKLIKEPGSG (833 aa). 5 cysteine pairs are disulfide-bonded: C42-C181, C76-C121, C109-C126, C222-C329, and C288-C310. The Cu(2+) site is built by H102 and H103. Positions 167, 237, 239, and 309 each coordinate Cu(2+). The interval 495–817 is peptidyl-alpha-hydroxyglycine alpha-amidating lyase; sequence DFHMEEALDW…LTEKLEHRSV (323 aa). NHL repeat units follow at residues 498–541, 567–608, 617–662, and 670–714; these read MEEA…NSFD, AAVL…LDPN, LGRS…FSPS, and GEES…FKTD. V517 is a binding site for Ca(2+). A protein is bound at residue R530. H582 is a Zn(2+) binding site. A Ca(2+)-binding site is contributed by L584. C631 and C652 are oxidised to a cystine. Y651 is an a protein binding site. H687 contributes to the Zn(2+) binding site. C699 and C710 are joined by a disulfide. An a protein-binding site is contributed by R703. Residue N762 is glycosylated (N-linked (GlcNAc...) asparagine). The NHL 5 repeat unit spans residues 766 to 809; the sequence is GEIIDIFKPVRKHFDMPHDIVASEDGTVYIGDAHTNTVWKFTLT. Residue H783 coordinates Zn(2+). D784 provides a ligand contact to Ca(2+). Residues 864 to 887 traverse the membrane as a helical segment; the sequence is VPVVLITTLLVIPVVVLLAIAIFI. I875 and R893 each carry sulfotyrosine. The Cytoplasmic segment spans residues 888–973; sequence RWKKSRAFGD…PLPALAPSSS (86 aa). Phosphoserine occurs at positions 918, 929, and 942. An interaction with RASSF9 region spans residues 925-942; it reads NFFASRKGYSRKGFDRLS. The disordered stretch occupies residues 937-973; the sequence is GFDRLSTEGSDQEKEDDGSESEEEYSAPLPALAPSSS. Position 943 is a phosphothreonine (T943). The residue at position 946 (S946) is a Phosphoserine; by UHMK1; in vitro. Residues 949-961 show a composition bias toward acidic residues; that stretch reads EKEDDGSESEEEY. Residue S957 is modified to Phosphoserine. The span at 962–973 shows a compositional bias: low complexity; sequence SAPLPALAPSSS.

This sequence in the C-terminal section; belongs to the peptidyl-alpha-hydroxyglycine alpha-amidating lyase family. It in the N-terminal section; belongs to the copper type II ascorbate-dependent monooxygenase family. Monomer. Interacts with RASSF9. The cofactor is Zn(2+). Requires Cu(2+) as cofactor.

The protein localises to the cytoplasmic vesicle. Its subcellular location is the secretory vesicle membrane. It localises to the membrane. The protein resides in the secreted. The catalysed reaction is a [peptide]-C-terminal glycine + 2 L-ascorbate + O2 = a [peptide]-C-terminal (2S)-2-hydroxyglycine + 2 monodehydro-L-ascorbate radical + H2O. It catalyses the reaction a [peptide]-C-terminal (2S)-2-hydroxyglycine = a [peptide]-C-terminal amide + glyoxylate. It carries out the reaction N-dodecanoylglycine + 2 L-ascorbate + O2 = N-dodecanoyl-(2S)-hydroxyglycine + 2 monodehydro-L-ascorbate radical + H2O. The enzyme catalyses N-dodecanoyl-(2S)-hydroxyglycine = dodecanamide + glyoxylate. The catalysed reaction is N-(9Z,12Z,15Z)-octadecatrienoylglycine + 2 L-ascorbate + O2 = N-(9Z,12Z,15Z)-octadecatrienoyl-(2S)-hydroxyglycine + 2 monodehydro-L-ascorbate radical + H2O. It catalyses the reaction N-(9Z,12Z,15Z)-octadecatrienoyl-(2S)-hydroxyglycine = (9Z,12Z,15Z)-octadecatrienamide + glyoxylate. It carries out the reaction N-(9Z-octadecenoyl)glycine + 2 L-ascorbate + O2 = N-(9Z-octadecenoyl)-(2S)-hydroxyglycine + 2 monodehydro-L-ascorbate radical + H2O. The enzyme catalyses N-(9Z-octadecenoyl)-(2S)-hydroxyglycine = (9Z)-octadecenamide + glyoxylate. The catalysed reaction is N-tetradecanoylglycine + 2 L-ascorbate + O2 = N-tetradecanoyl-(2S)-hydroxyglycine + 2 monodehydro-L-ascorbate radical + H2O. It catalyses the reaction N-tetradecanoyl-(2S)-hydroxyglycine = tetradecamide + glyoxylate. It carries out the reaction N-decanoylglycine + 2 L-ascorbate + O2 = N-decanoyl-(2S)-hydroxyglycine + 2 monodehydro-L-ascorbate radical + H2O. The enzyme catalyses N-decanoyl-(2S)-hydroxyglycine = decanamide + glyoxylate. The catalysed reaction is N-octanoylglycine + 2 L-ascorbate + O2 = N-octanoyl-(2S)-hydroxyglycine + 2 monodehydro-L-ascorbate radical + H2O. It catalyses the reaction N-octanoyl-(2S)-hydroxyglycine = octanamide + glyoxylate. PAM activity is inhibited by EDTA, phenylglyoxal and diethyl pyrocarbonate. PAL activity is stimulated by cadmium and inhibited by mercury. In terms of biological role, bifunctional enzyme that catalyzes amidation of the C-terminus of proteins. Alpha-amidation is present at the C-terminus of many endocrine hormones and neuropeptides and is required for their activity. C-terminal amidation also takes place in response to protein fragmentation triggered by oxidative stress, promoting degradation of amidated protein fragments by the proteasome. Alpha-amidation involves two sequential reactions, both of which are catalyzed by separate catalytic domains of the enzyme. The first step, catalyzed by peptidyl alpha-hydroxylating monooxygenase (PHM) domain, is the copper-, ascorbate-, and O2- dependent stereospecific hydroxylation (with S stereochemistry) at the alpha-carbon (C-alpha) of the C-terminal glycine of the peptidylglycine substrate. The second step, catalyzed by the peptidylglycine amidoglycolate lyase (PAL) domain, is the zinc-dependent cleavage of the N-C-alpha bond, producing the alpha-amidated peptide and glyoxylate. Similarly, catalyzes the two-step conversion of an N-fatty acylglycine to a primary fatty acid amide and glyoxylate. In Homo sapiens (Human), this protein is Peptidyl-glycine alpha-amidating monooxygenase.